The following is a 515-amino-acid chain: ATP-dependent RNA helicase DBP3 (515 aa).

The tract at residues 1 to 67 (MAKRPLQTEA…SDSRYLPTPE (67 aa)) is disordered. Residues 100-127 (TSFSFLPESSNDLYLPLEKFSSPTPIQA) carry the Q motif motif. Residues 130–306 (WPLAFAGRDL…ASFTKNPVTV (177 aa)) form the Helicase ATP-binding domain. ATP is bound at residue 143-150 (AETGSGKT). The short motif at 252 to 255 (DEAD) is the DEAD box element. Residues 335 to 484 (RLLELLRRYQ…DVPESLLKFG (150 aa)) form the Helicase C-terminal domain.

The protein belongs to the DEAD box helicase family. DDX5/DBP2 subfamily.

The protein resides in the nucleus. Its subcellular location is the nucleolus. It carries out the reaction ATP + H2O = ADP + phosphate + H(+). Functionally, ATP-dependent RNA helicase required for 60S ribosomal subunit synthesis. Involved in efficient pre-rRNA processing, predominantly at site A3, which is necessary for the normal formation of 25S and 5.8S rRNAs. This chain is ATP-dependent RNA helicase DBP3 (DBP3), found in Coccidioides immitis (strain RS) (Valley fever fungus).